The chain runs to 474 residues: MSKKLHIKTWGCQMNEYDSSKMADLLGEYQGYTLTEEAEEADILLLNTCSIREKAQEKVFHQLGRWKTLKDKNPDLIIGVGGCVASQEGKAIKDRAHCVDIIFGPQTLHRLPDMIEQVRRGEKAVIDVSFPEIEKFDRLPEPRAEGPTAFVSIMEGCSKYCSFCVVPYTRGEEVSRPSDDIILEIAQLAEQGVREVNLLGQNVNAYRGATHDGGICTFAELLRYVAAIDGIDRIRFTTSHPIEFTQDIIDVYEDTPELVSFLHLPVQSGSDRILTAMKRGHMAIEYKSIIRRLRKARPDIQISSDFIIGFPGETKEDFADTMKLIEDVAFDHSFSFIYSARPGTPAADLPDDVDMEEKKQRLAILQDRITQQAMRYSRHMMGTVQRILVEGPSVKNPMELRGRTENNRVVNFEGQPKHIGSFVDVEIVDVYTNSLRGKFIRGEDEMDLRRNLRPSDILAKHKQDDDLGVTQFKP.

In terms of domain architecture, MTTase N-terminal spans 3 to 120; sequence KKLHIKTWGC…LPDMIEQVRR (118 aa). Positions 12, 49, 83, 157, 161, and 164 each coordinate [4Fe-4S] cluster. Residues 143–375 form the Radical SAM core domain; it reads RAEGPTAFVS…QDRITQQAMR (233 aa). Residues 378-441 form the TRAM domain; sequence RHMMGTVQRI…TNSLRGKFIR (64 aa).

Belongs to the methylthiotransferase family. MiaB subfamily. As to quaternary structure, monomer. [4Fe-4S] cluster serves as cofactor.

The protein localises to the cytoplasm. The enzyme catalyses N(6)-dimethylallyladenosine(37) in tRNA + (sulfur carrier)-SH + AH2 + 2 S-adenosyl-L-methionine = 2-methylsulfanyl-N(6)-dimethylallyladenosine(37) in tRNA + (sulfur carrier)-H + 5'-deoxyadenosine + L-methionine + A + S-adenosyl-L-homocysteine + 2 H(+). Functionally, catalyzes the methylthiolation of N6-(dimethylallyl)adenosine (i(6)A), leading to the formation of 2-methylthio-N6-(dimethylallyl)adenosine (ms(2)i(6)A) at position 37 in tRNAs that read codons beginning with uridine. This is tRNA-2-methylthio-N(6)-dimethylallyladenosine synthase from Shewanella sp. (strain MR-7).